The chain runs to 220 residues: Ribosomal RNA large subunit methyltransferase E (220 aa).

Residues Gly64, Trp66, Asp84, Asp100, and Asp125 each coordinate S-adenosyl-L-methionine. Residue Lys165 is the Proton acceptor of the active site.

This sequence belongs to the class I-like SAM-binding methyltransferase superfamily. RNA methyltransferase RlmE family.

It localises to the cytoplasm. The enzyme catalyses uridine(2552) in 23S rRNA + S-adenosyl-L-methionine = 2'-O-methyluridine(2552) in 23S rRNA + S-adenosyl-L-homocysteine + H(+). Its function is as follows. Specifically methylates the uridine in position 2552 of 23S rRNA at the 2'-O position of the ribose in the fully assembled 50S ribosomal subunit. This is Ribosomal RNA large subunit methyltransferase E from Thiobacillus denitrificans (strain ATCC 25259 / T1).